Reading from the N-terminus, the 158-residue chain is SUMO-conjugating enzyme UBC9 (158 aa).

The 154-residue stretch at 4–157 (IALSRLAQER…VRAQAKKFAP (154 aa)) folds into the UBC core domain. Residues 13–18 (RKAWRK) form an interaction with SUMO1 region. Cys-93 functions as the Glycyl thioester intermediate in the catalytic mechanism.

The protein belongs to the ubiquitin-conjugating enzyme family. Interacts with SOX9.

It is found in the nucleus. The protein localises to the cytoplasm. It functions in the pathway protein modification; protein sumoylation. Accepts the ubiquitin-like proteins SUMO1, SUMO2 and SUMO3 from the UBLE1A-UBLE1B E1 complex and catalyzes their covalent attachment to other proteins with the help of an E3 ligase such as RANBP2 or CBX4. Essential for nuclear architecture and chromosome segregation. This Gallus gallus (Chicken) protein is SUMO-conjugating enzyme UBC9 (UBE2I).